The sequence spans 238 residues: Uridylate kinase (238 aa).

12–15 (KLSG) contacts ATP. Position 54 (glycine 54) interacts with UMP. 2 residues coordinate ATP: glycine 55 and arginine 59. UMP-binding positions include aspartate 74 and 135–142 (TGNPFFTT). Residues threonine 162, tyrosine 168, and aspartate 171 each coordinate ATP.

This sequence belongs to the UMP kinase family. As to quaternary structure, homohexamer.

It is found in the cytoplasm. It catalyses the reaction UMP + ATP = UDP + ADP. It functions in the pathway pyrimidine metabolism; CTP biosynthesis via de novo pathway; UDP from UMP (UMPK route): step 1/1. Its activity is regulated as follows. Inhibited by UTP. Its function is as follows. Catalyzes the reversible phosphorylation of UMP to UDP. The protein is Uridylate kinase of Bordetella avium (strain 197N).